Consider the following 384-residue polypeptide: Lipid-A-disaccharide synthase (384 aa).

It belongs to the LpxB family.

The catalysed reaction is 2-N,3-O-bis[(3R)-3-hydroxytetradecanoyl]-alpha-D-glucosaminyl 1-phosphate + UDP-2-N,3-O-bis[(3R)-3-hydroxytetradecanoyl]-alpha-D-glucosamine = lipid A disaccharide (E. coli) + UDP + H(+). The enzyme catalyses a lipid X + a UDP-2-N,3-O-bis[(3R)-3-hydroxyacyl]-alpha-D-glucosamine = a lipid A disaccharide + UDP + H(+). The protein operates within glycolipid biosynthesis; lipid IV(A) biosynthesis; lipid IV(A) from (3R)-3-hydroxytetradecanoyl-[acyl-carrier-protein] and UDP-N-acetyl-alpha-D-glucosamine: step 5/6. Condensation of UDP-2,3-diacylglucosamine and 2,3-diacylglucosamine-1-phosphate to form lipid A disaccharide, a precursor of lipid A, a phosphorylated glycolipid that anchors the lipopolysaccharide to the outer membrane of the cell. This is Lipid-A-disaccharide synthase from Blochmanniella floridana.